Consider the following 102-residue polypeptide: Small ribosomal subunit protein uS10 (102 aa).

Belongs to the universal ribosomal protein uS10 family. As to quaternary structure, part of the 30S ribosomal subunit.

Functionally, involved in the binding of tRNA to the ribosomes. The protein is Small ribosomal subunit protein uS10 of Geobacter sulfurreducens (strain ATCC 51573 / DSM 12127 / PCA).